We begin with the raw amino-acid sequence, 277 residues long: Large ribosomal subunit protein uL2 (277 aa).

The interval 219–277 (TVRGSVMNPNDHPHGGGEGKAPVGRKAPSTPWGKPALGLKTRNKKAKSDKLIVRRRNEK) is disordered. A compositionally biased stretch (basic and acidic residues) spans 264–277 (AKSDKLIVRRRNEK).

Belongs to the universal ribosomal protein uL2 family. As to quaternary structure, part of the 50S ribosomal subunit. Forms a bridge to the 30S subunit in the 70S ribosome.

One of the primary rRNA binding proteins. Required for association of the 30S and 50S subunits to form the 70S ribosome, for tRNA binding and peptide bond formation. It has been suggested to have peptidyltransferase activity; this is somewhat controversial. Makes several contacts with the 16S rRNA in the 70S ribosome. The polypeptide is Large ribosomal subunit protein uL2 (Streptococcus pneumoniae serotype 2 (strain D39 / NCTC 7466)).